Here is a 1012-residue protein sequence, read N- to C-terminus: ATP-dependent DNA helicase MPH1 (1012 aa).

The Helicase ATP-binding domain maps to 94-261 (IVQKSLYQNT…EVVNNLNISN (168 aa)). 107–114 (IPTGMGKT) is an ATP binding site. Residues 209 to 212 (DEAH) carry the DEAH box motif. The 225-residue stretch at 430–654 (KLQKIINELS…NFVEYKKSDR (225 aa)) folds into the Helicase C-terminal domain. The disordered stretch occupies residues 493–555 (DEGFIRKNKP…AQISGMNQKQ (63 aa)). Basic residues predominate over residues 498 to 510 (RKNKPKGRKKADR). The segment covering 511–537 (LKRLEEDKQKQLSKAKQKEQEKVERSS) has biased composition (basic and acidic residues).

It belongs to the DEAD box helicase family. DEAH subfamily. FANCM sub-subfamily. In terms of assembly, interacts with the MHF histone-fold complex to form the FANCM-MHF complex.

It is found in the nucleus. It catalyses the reaction ATP + H2O = ADP + phosphate + H(+). Its function is as follows. ATP-dependent DNA helicase involved in DNA damage repair by homologous recombination and in genome maintenance. Capable of unwinding D-loops. Plays a role in limiting crossover recombinants during mitotic DNA double-strand break (DSB) repair. Component of a FANCM-MHF complex which promotes gene conversion at blocked replication forks, probably by reversal of the stalled fork. The protein is ATP-dependent DNA helicase MPH1 of Vanderwaltozyma polyspora (strain ATCC 22028 / DSM 70294 / BCRC 21397 / CBS 2163 / NBRC 10782 / NRRL Y-8283 / UCD 57-17) (Kluyveromyces polysporus).